We begin with the raw amino-acid sequence, 500 residues long: Perfringolysin O (500 aa).

The signal sequence occupies residues 1-28; the sequence is MIRFKKTKLIASIAMALCLFSQPVISFS. Beta stranded transmembrane passes span 189–202, 209–218, 287–296, and 304–316; these read KSQI…NAKV, VDFNAVANNE, SKDVQAAFKA, and KNSQ…YENS. The Conserved undecapeptide signature appears at 458 to 468; that stretch reads ECTGLAWEWWR. The Cholesterol binding motif lies at 490-491; sequence TL.

The protein belongs to the cholesterol-dependent cytolysin family. As to quaternary structure, homooligomeric pore complex of 35 to 50 subunits; when inserted in the host membrane.

The protein resides in the secreted. It is found in the host cell membrane. In terms of biological role, a cholesterol-dependent toxin that causes cytolysis by forming pores in cholesterol containing host membranes. After binding to target membranes, the protein assembles into a pre-pore complex. A conformation change leads to insertion in the host membrane and formation of an oligomeric pore complex. Cholesterol is required for binding to host cell membranes, membrane insertion and pore formation; cholesterol binding is mediated by a Thr-Leu pair in the C-terminus. Can be reversibly inactivated by oxidation. The sequence is that of Perfringolysin O (pfo) from Clostridium perfringens (strain ATCC 13124 / DSM 756 / JCM 1290 / NCIMB 6125 / NCTC 8237 / Type A).